Here is a 420-residue protein sequence, read N- to C-terminus: UDP-N-acetylglucosamine 1-carboxyvinyltransferase (420 aa).

Residue 22–23 (KN) participates in phosphoenolpyruvate binding. Residue Arg-92 coordinates UDP-N-acetyl-alpha-D-glucosamine. Catalysis depends on Cys-116, which acts as the Proton donor. Cys-116 carries the 2-(S-cysteinyl)pyruvic acid O-phosphothioketal modification. Residues 121-125 (RPVDQ), Asp-304, and Ile-326 each bind UDP-N-acetyl-alpha-D-glucosamine.

This sequence belongs to the EPSP synthase family. MurA subfamily.

It is found in the cytoplasm. The enzyme catalyses phosphoenolpyruvate + UDP-N-acetyl-alpha-D-glucosamine = UDP-N-acetyl-3-O-(1-carboxyvinyl)-alpha-D-glucosamine + phosphate. It participates in cell wall biogenesis; peptidoglycan biosynthesis. Functionally, cell wall formation. Adds enolpyruvyl to UDP-N-acetylglucosamine. The protein is UDP-N-acetylglucosamine 1-carboxyvinyltransferase of Paraburkholderia xenovorans (strain LB400).